A 742-amino-acid polypeptide reads, in one-letter code: MAERRVSNGEEVVINVSDKEDSKDPRASPSFNPLASPDSDAGIEKSKPVPPISIPTPEIYKFSGSVHKPPKIPSPEGLVRRKSLSRSIYSKPKSRFGEQQSFRYDSTREENGGRSLREQFGAGSFARGSFDRASPNNKSNRSVASAALSKVAEEEPDENEEIYKKVKLHRVKRSGMKPLAFLELVVFMAILGALIVSLTIDVVNKHTIWGLEFWKWCVLVMVTLSGMLVTNWFMHFVVFIIEKNYLLRKKVLYFVHGLKKNVQVFIWFSLVLIAWICLFDGDVKRTRKTKRFLDFITWTIVSLLVGSILFLVKTFALKVLASKFNVRNFFERIQESVFHQYVLQTLSGPPLIEEAENVGRVPSTGHLSFTRTKDGKVKDKKVIDMGKVHRMKQEKVSAWTMRVLIEAVGTSGISTISSTLDEVNNKKERTDKEITNEMEAVAAAYDVFNNVAKPNHNYIEEDDLLRFMIKEEVDLVLPLIEDADTGKITRKTFTEWVVNVYTSRKTIGHSLNDTKTAVKQLDKLITGILTVITFIVWMVLLDIASTKLLLVFSSQFLGLAFMIGSTCKNIFESFMFVFVMHPYDVGDRCVVDGVMLLVEEIDLLTTVFLKIDNEKVFYPNSVLISKPISNFYRSPDMGDYVDFGIAFSTPAEKIGCLKGKIGEYLVANSQHWYPEAQVMVRAIENMNKLVLNILVQHTINFQVYVEKSLRRTALIIAIKRILEDLEIDYTLLPQDVNLTGHK.

Residues 1-117 form a disordered region; sequence MAERRVSNGE…REENGGRSLR (117 aa). Residues 17–26 are compositionally biased toward basic and acidic residues; that stretch reads SDKEDSKDPR. Residues S28 and S36 each carry the phosphoserine modification. The segment covering 105 to 117 has biased composition (basic and acidic residues); the sequence is DSTREENGGRSLR. 2 positions are modified to phosphoserine: S142 and S145. A run of 6 helical transmembrane segments spans residues 180 to 200, 221 to 241, 261 to 281, 292 to 312, 524 to 544, and 559 to 579; these read AFLELVVFMAILGALIVSLTI, MVTLSGMLVTNWFMHFVVFII, NVQVFIWFSLVLIAWICLFDG, FLDFITWTIVSLLVGSILFLV, LITGILTVITFIVWMVLLDIA, and LAFMIGSTCKNIFESFMFVFV.

It belongs to the MscS (TC 1.A.23) family. Detected in the epidermis, cortex, and endodermis of the root tip.

The protein localises to the cell membrane. Functionally, mechanosensitive channel that opens in response to stretch forces in the membrane lipid bilayer. The sequence is that of Mechanosensitive ion channel protein 9 (MSL9) from Arabidopsis thaliana (Mouse-ear cress).